Reading from the N-terminus, the 244-residue chain is Uridylate kinase (244 aa).

15 to 18 lines the ATP pocket; sequence KLSG. The involved in allosteric activation by GTP stretch occupies residues 23–28; that stretch reads GSEGFG. A UMP-binding site is contributed by Gly57. Residues Gly58 and Arg62 each contribute to the ATP site. UMP contacts are provided by residues Asp77 and 138–145; that span reads TGNPFFTT. The ATP site is built by Thr165, Phe171, and Asp174.

It belongs to the UMP kinase family. As to quaternary structure, homohexamer.

Its subcellular location is the cytoplasm. The catalysed reaction is UMP + ATP = UDP + ADP. It participates in pyrimidine metabolism; CTP biosynthesis via de novo pathway; UDP from UMP (UMPK route): step 1/1. Its activity is regulated as follows. Allosterically activated by GTP. Inhibited by UTP. Functionally, catalyzes the reversible phosphorylation of UMP to UDP. The protein is Uridylate kinase of Aeromonas salmonicida (strain A449).